A 1217-amino-acid polypeptide reads, in one-letter code: Disease resistance protein RPS4 (1217 aa).

The TIR domain maps to 14–175 (PQHQVFINFR…EIVKAVKTAL (162 aa)). Position 23 to 28 (23 to 28 (RGADLR)) interacts with NAD(+). The interval 33–34 (SH) is important for interaction with RRS1. E88 is an active-site residue. In terms of domain architecture, NB-ARC spans 211–472 (EQRLKDLEEK…FRSQDKDYVE (262 aa)). LRR repeat units lie at residues 581–606 (MGNL…KINI), 614–636 (LKEV…DFNP), 637–659 (INLV…DKDT), 682–706 (AEKL…MKKM), 708–728 (MLAF…EMNL), 729–749 (ISLK…PLIS), 750–774 (DNIE…KLQR), 796–818 (LKAL…EIDI), 819–842 (SFLN…SVQY), 843–860 (LCLS…GISQ), and 861–887 (LSQL…NLQC). A disordered region spans residues 1161-1195 (TTEGVDGRVNKKKKTRMDNGRPKKKQRSGRDDNQT). A Nuclear localization signal motif is present at residues 1170–1177 (NKKKKTRM).

The protein belongs to the disease resistance TIR-NB-LRR family. Interacts with EDS1. Interacts with SRFR1. Interacts with RRS1.

It is found in the endomembrane system. The protein resides in the cytoplasm. Its subcellular location is the nucleus. The enzyme catalyses NAD(+) + H2O = ADP-D-ribose + nicotinamide + H(+). Its function is as follows. Disease resistance (R) protein that specifically recognizes the AvrRps4 type III effector avirulence protein from P.syringae. Resistance proteins guard the plant against pathogens that contain an appropriate avirulence protein via an indirect interaction with this avirulence protein. That triggers a defense system including the hypersensitive response, which restricts the pathogen growth. Probably acts as a NAD(+) hydrolase (NADase): in response to activation, catalyzes cleavage of NAD(+) into ADP-D-ribose (ADPR) and nicotinamide; NAD(+) cleavage triggering a defense system that promotes cell death. The combined presence of both regular and alternative RPS4 transcripts with truncated open reading frames (ORFs) is necessary for function. RPS4 function is regulated at multiple levels, including gene expression, alternative splicing, and protein stability. When over-expressed, confers temperature-conditioned EDS1-dependent auto-immunity. Heterodimerization with RRS1 is required to form a functional complex to recognize AvrRps4 and PopP2. Abscisic acid deficiency enhances nuclear accumulation of RPS4 and its cell death-inducing activity. The protein is Disease resistance protein RPS4 of Arabidopsis thaliana (Mouse-ear cress).